The sequence spans 281 residues: Pantothenate synthetase (281 aa).

30 to 37 (MGNLHQGH) serves as a coordination point for ATP. His37 (proton donor) is an active-site residue. Gln61 serves as a coordination point for (R)-pantoate. Gln61 is a beta-alanine binding site. 149–152 (GNKD) is a binding site for ATP. Gln155 is a (R)-pantoate binding site. Residues Ile178 and 186-189 (MSSR) contribute to the ATP site.

It belongs to the pantothenate synthetase family. Homodimer.

Its subcellular location is the cytoplasm. The enzyme catalyses (R)-pantoate + beta-alanine + ATP = (R)-pantothenate + AMP + diphosphate + H(+). It functions in the pathway cofactor biosynthesis; (R)-pantothenate biosynthesis; (R)-pantothenate from (R)-pantoate and beta-alanine: step 1/1. In terms of biological role, catalyzes the condensation of pantoate with beta-alanine in an ATP-dependent reaction via a pantoyl-adenylate intermediate. The protein is Pantothenate synthetase of Shewanella sp. (strain ANA-3).